Here is a 126-residue protein sequence, read N- to C-terminus: Glycine cleavage system H protein (126 aa).

One can recognise a Lipoyl-binding domain in the interval 24-106 (TITVGITDHA…YGEGWFFRMK (83 aa)). An N6-lipoyllysine modification is found at Lys-65.

Belongs to the GcvH family. The glycine cleavage system is composed of four proteins: P, T, L and H. (R)-lipoate serves as cofactor.

Functionally, the glycine cleavage system catalyzes the degradation of glycine. The H protein shuttles the methylamine group of glycine from the P protein to the T protein. This is Glycine cleavage system H protein from Psychrobacter arcticus (strain DSM 17307 / VKM B-2377 / 273-4).